The chain runs to 141 residues: uncharacterized protein (141 aa).

This is an uncharacterized protein from Homo sapiens (Human).